Reading from the N-terminus, the 276-residue chain is Transcriptional antiactivator ExsD (276 aa).

Can form homotrimer. Interacts with ExsA; this interaction inhibits ExsA activity. Interacts with ExsC; this interaction dissociates the ExsD-ExsA complex.

Its function is as follows. Negative regulator of the type III secretion system regulon. Acts by disrupting transcriptional activator ExsA self-association and DNA-binding activity in absence of inducing signals. Upon host cell contact, this interaction is disrupted by the anti-antiactivator protein ExsC leading to ExsA activation. This Pseudomonas aeruginosa (strain ATCC 15692 / DSM 22644 / CIP 104116 / JCM 14847 / LMG 12228 / 1C / PRS 101 / PAO1) protein is Transcriptional antiactivator ExsD (exsD).